The primary structure comprises 749 residues: 5-methyltetrahydropteroyltriglutamate--homocysteine methyltransferase (749 aa).

Residues 15–18 (RELK) and Lys114 each bind 5-methyltetrahydropteroyltri-L-glutamate. Residues 425-427 (IGS) and Glu478 each bind L-homocysteine. Residues 425 to 427 (IGS) and Glu478 contribute to the L-methionine site. Trp555 contributes to the 5-methyltetrahydropteroyltri-L-glutamate binding site. L-homocysteine is bound at residue Asp593. Asp593 provides a ligand contact to L-methionine. Glu599 provides a ligand contact to 5-methyltetrahydropteroyltri-L-glutamate. Positions 636, 638, and 660 each coordinate Zn(2+). His689 serves as the catalytic Proton donor. Cys721 contacts Zn(2+).

Belongs to the vitamin-B12 independent methionine synthase family. The cofactor is Zn(2+).

The catalysed reaction is 5-methyltetrahydropteroyltri-L-glutamate + L-homocysteine = tetrahydropteroyltri-L-glutamate + L-methionine. It functions in the pathway amino-acid biosynthesis; L-methionine biosynthesis via de novo pathway; L-methionine from L-homocysteine (MetE route): step 1/1. Functionally, catalyzes the transfer of a methyl group from 5-methyltetrahydrofolate to homocysteine resulting in methionine formation. The chain is 5-methyltetrahydropteroyltriglutamate--homocysteine methyltransferase from Streptococcus pneumoniae serotype 2 (strain D39 / NCTC 7466).